The primary structure comprises 326 residues: F-box/LRR-repeat protein 12 (326 aa).

An F-box domain is found at 1–47 (MATLVELPDSVLLEIFSYLPVRDRIRISRVCHRWKRLVDDRWLWRHV). LRR repeat units lie at residues 51–78 (LYTM…RMGG), 86–111 (APQL…CLHV), 113–133 (DLSM…ELHS), 161–185 (VPAF…VLGG), 186–211 (TYRV…EVLG), 212–236 (CTLS…IRLT), 237–261 (VRGL…CLQG), and 266–291 (PEMP…ELQG).

As to quaternary structure, interacts with SKP1 and CUL1.

It functions in the pathway protein modification; protein ubiquitination. Functionally, substrate-recognition component of the SCF (SKP1-CUL1-F-box protein)-type E3 ubiquitin ligase complex. Mediates the polyubiquitination and proteasomal degradation of CAMK1 leading to disruption of cyclin D1/CDK4 complex assembly which results in G1 cell cycle arrest in lung epithelia. This Homo sapiens (Human) protein is F-box/LRR-repeat protein 12 (FBXL12).